A 237-amino-acid chain; its full sequence is LexA repressor (237 aa).

A DNA-binding region (H-T-H motif) is located at residues 26–46 (FDEMKEALDLRSKSGIHRLIT). A disordered region spans residues 84 to 110 (GFSPSVIEGGAQPKPSSRDLAPARSSG). Residues Ser-158 and Lys-196 each act as for autocatalytic cleavage activity in the active site.

This sequence belongs to the peptidase S24 family. As to quaternary structure, homodimer.

The catalysed reaction is Hydrolysis of Ala-|-Gly bond in repressor LexA.. Represses a number of genes involved in the response to DNA damage (SOS response), including recA and lexA. In the presence of single-stranded DNA, RecA interacts with LexA causing an autocatalytic cleavage which disrupts the DNA-binding part of LexA, leading to derepression of the SOS regulon and eventually DNA repair. This is LexA repressor from Parvibaculum lavamentivorans (strain DS-1 / DSM 13023 / NCIMB 13966).